A 1023-amino-acid polypeptide reads, in one-letter code: Probable histidine kinase 3 (1023 aa).

Over 1-80 (MDEMSCGGGG…RGWRVVRETW (80 aa)) the chain is Cytoplasmic. A helical transmembrane segment spans residues 81-101 (WWVLLLWILAGSLGSFYLFLF). At 102–387 (MNAQSLDKRR…CRFEKKPPWP (286 aa)) the chain is on the extracellular side. Residues 151-352 (TPSAIDQMTF…TNESPISMYG (202 aa)) form the CHASE domain. The chain crosses the membrane as a helical span at residues 388–408 (WLAITSSFGTLVIALLTGHIF). Residues 409-1023 (QATVHRIAKV…RFFQNHDQVE (615 aa)) are Cytoplasmic-facing. The 271-residue stretch at 445 to 715 (TVSHEIRTPM…TFTFTAVLMR (271 aa)) folds into the Histidine kinase domain. The residue at position 448 (histidine 448) is a Phosphohistidine; by autocatalysis. Response regulatory domains follow at residues 732–854 (NALV…RRAL) and 880–1016 (QIIV…ARFF). Residue aspartate 783 is modified to 4-aspartylphosphate. The segment at 812–831 (LFLLGSSASSPKGGSDTSRE) is disordered. The span at 817–827 (SSASSPKGGSD) shows a compositional bias: polar residues. Aspartate 930 carries the post-translational modification 4-aspartylphosphate.

Activation probably requires a transfer of a phosphate group between a His in the transmitter domain and an Asp of the receiver domain. Highly expressed in young leaves and at lower levels in roots, mature leaves, stems and spikelets.

Its subcellular location is the cell membrane. It carries out the reaction ATP + protein L-histidine = ADP + protein N-phospho-L-histidine.. In terms of biological role, cytokinin receptor related to bacterial two-component regulators. Functions as a histidine kinase and transmits the stress signal to a downstream MAPK cascade. This is Probable histidine kinase 3 from Oryza sativa subsp. japonica (Rice).